Consider the following 490-residue polypeptide: MQRGSVGISTTSTFTLATPLLLESGASLFSVQIAYETYGTLNHDKSNAILVCHALTGDAHAAGHHGDESRPGWWDGVIGPGKAFDTDKYFVICSNVLGGCKGTTGPASQNPDTGKPYGTSFPVVTIRDMVNVQKALIDHLGISQLFAVAGGSMGGMQVLQWMVSYPSMVRKAIAIAATGSSTPQQIAFNEVGRKAITADPAWCGGDYYGKEHPVKGLSLARMVAHITYLSDASMHTKFGRALQDREFRGFDFDTEFQVESYLHHQGTSFTKRFDANSYLYLTKAVDYFDLSVDDSLISGFAPTKATVLIISVTSDWLYPPYQSQEIVSALSANECDVHYCELRSQFGHDAFLIETGQLNYSISRFLDHTLVRDVMNTQVPVISEQSTIAVAARMMITQGVNHLPVLAPDQSLVGIVTSWDIANAVACGYTSLDQIMSSQVITTTGDETIEVAASRMEQHRISALPVIDQAQHVIGLISSDGLSKLIGRGP.

Positions 47–353 (NAILVCHALT…SQFGHDAFLI (307 aa)) constitute an AB hydrolase-1 domain. The active-site Nucleophile is the Ser152. Arg221 contacts substrate. Residues Asp315 and His348 contribute to the active site. Residue Asp349 coordinates substrate. 2 consecutive CBS domains span residues 375–432 (MNTQ…YTSL) and 436–490 (MSSQ…GRGP).

Belongs to the AB hydrolase superfamily. MetX family. In terms of assembly, homodimer.

It localises to the cytoplasm. It catalyses the reaction L-homoserine + acetyl-CoA = O-acetyl-L-homoserine + CoA. It functions in the pathway amino-acid biosynthesis; L-methionine biosynthesis via de novo pathway; O-acetyl-L-homoserine from L-homoserine: step 1/1. Its function is as follows. Transfers an acetyl group from acetyl-CoA to L-homoserine, forming acetyl-L-homoserine. This Methanosphaerula palustris (strain ATCC BAA-1556 / DSM 19958 / E1-9c) protein is Homoserine O-acetyltransferase.